Here is a 290-residue protein sequence, read N- to C-terminus: Carbonic anhydrase-related protein (290 aa).

The segment at 1–26 (MADLSFIEDTVAFPEKEEDEEEEEEG) is disordered. The residue at position 5 (S5) is a Phosphoserine. Residues 16–26 (KEEDEEEEEEG) are compositionally biased toward acidic residues. The 263-residue stretch at 27–289 (VEWGYEEGVE…LSDRVIRAAF (263 aa)) folds into the Alpha-carbonic anhydrase domain. The active-site Proton donor/acceptor is the H87. Zn(2+) contacts are provided by H118 and H141.

This sequence belongs to the alpha-carbonic anhydrase family.

Does not have a carbonic anhydrase catalytic activity. In Homo sapiens (Human), this protein is Carbonic anhydrase-related protein (CA8).